Here is an 801-residue protein sequence, read N- to C-terminus: Probable inorganic carbon transporter subunit DabA (801 aa).

Positions 332, 334, 500, and 515 each coordinate Zn(2+).

It belongs to the inorganic carbon transporter (TC 9.A.2) DabA family. Forms a complex with DabB. Zn(2+) is required as a cofactor.

The protein resides in the cell inner membrane. Its function is as follows. Part of an energy-coupled inorganic carbon pump. This is Probable inorganic carbon transporter subunit DabA from Marinobacter nauticus (strain ATCC 700491 / DSM 11845 / VT8) (Marinobacter aquaeolei).